Consider the following 557-residue polypeptide: Thermosome subunit 2 (557 aa).

Residues 527-557 (DLSTGGDDDEEGGAPGGMGGMGGMGGMGGAM) are disordered. The segment covering 539-557 (GAPGGMGGMGGMGGMGGAM) has biased composition (gly residues).

The protein belongs to the TCP-1 chaperonin family. In terms of assembly, the thermosome or CCT complex is a oligomeric complex of two octameric double-ring structures; the complex is probably a heterooligomer of CCT1, CCT2 and CCT3 with yet unknown stoichiometry.

Its function is as follows. Molecular chaperone that assists in the folding or refolding of nascent or denatured proteins along with ATP hydrolysis. ATPase activity is highest in thermosome assemblies containing CCT1:CCT2, followed by assemblies containing CCT1:CCT2:CCT3. Seems to contribute to thermosome ATPase activity. Not required for growth. The sequence is that of Thermosome subunit 2 (cct2) from Haloferax volcanii (strain ATCC 29605 / DSM 3757 / JCM 8879 / NBRC 14742 / NCIMB 2012 / VKM B-1768 / DS2) (Halobacterium volcanii).